The sequence spans 142 residues: NCT transcriptional regulatory complex subunit B (142 aa).

The protein belongs to the NC2 beta/DR1 family. Forms the NCT transcriptional regulatory complex with nctA and mot1.

It localises to the nucleus. Functionally, part of the NCT transcriptional regulatory complex that acts as a key regulator of ergosterol biosynthesis and the azole exporter cdr1B. The NCT complex binds the promoters of genes linked to azole susceptibility, and especially represses the expression of cdr1B transporter. This Aspergillus fumigatus (strain CBS 144.89 / FGSC A1163 / CEA10) (Neosartorya fumigata) protein is NCT transcriptional regulatory complex subunit B.